The primary structure comprises 123 residues: Small ribosomal subunit protein uS12 (123 aa).

The residue at position 89 (D89) is a 3-methylthioaspartic acid.

This sequence belongs to the universal ribosomal protein uS12 family. Part of the 30S ribosomal subunit. Contacts proteins S8 and S17. May interact with IF1 in the 30S initiation complex.

In terms of biological role, with S4 and S5 plays an important role in translational accuracy. Interacts with and stabilizes bases of the 16S rRNA that are involved in tRNA selection in the A site and with the mRNA backbone. Located at the interface of the 30S and 50S subunits, it traverses the body of the 30S subunit contacting proteins on the other side and probably holding the rRNA structure together. The combined cluster of proteins S8, S12 and S17 appears to hold together the shoulder and platform of the 30S subunit. This chain is Small ribosomal subunit protein uS12, found in Desulfovibrio desulfuricans (strain ATCC 27774 / DSM 6949 / MB).